The sequence spans 291 residues: Elongation factor Ts (291 aa).

The segment at 78–81 (TDFV) is involved in Mg(2+) ion dislocation from EF-Tu.

This sequence belongs to the EF-Ts family.

The protein localises to the cytoplasm. In terms of biological role, associates with the EF-Tu.GDP complex and induces the exchange of GDP to GTP. It remains bound to the aminoacyl-tRNA.EF-Tu.GTP complex up to the GTP hydrolysis stage on the ribosome. The chain is Elongation factor Ts from Ureaplasma parvum serovar 3 (strain ATCC 27815 / 27 / NCTC 11736).